We begin with the raw amino-acid sequence, 933 residues long: Isoleucine--tRNA ligase (933 aa).

The short motif at 57–67 (PYANGNIHVGH) is the 'HIGH' region element. Position 554 (E554) interacts with L-isoleucyl-5'-AMP. The 'KMSKS' region signature appears at 595-599 (KMSKS). Position 598 (K598) interacts with ATP.

This sequence belongs to the class-I aminoacyl-tRNA synthetase family. IleS type 1 subfamily. In terms of assembly, monomer.

It localises to the cytoplasm. The enzyme catalyses tRNA(Ile) + L-isoleucine + ATP = L-isoleucyl-tRNA(Ile) + AMP + diphosphate. Functionally, catalyzes the attachment of isoleucine to tRNA(Ile). As IleRS can inadvertently accommodate and process structurally similar amino acids such as valine, to avoid such errors it has two additional distinct tRNA(Ile)-dependent editing activities. One activity is designated as 'pretransfer' editing and involves the hydrolysis of activated Val-AMP. The other activity is designated 'posttransfer' editing and involves deacylation of mischarged Val-tRNA(Ile). The chain is Isoleucine--tRNA ligase from Streptococcus pyogenes serotype M1.